The chain runs to 214 residues: Ceramide-1-phosphate transfer protein (214 aa).

Residues Asp-56, Lys-60, Arg-106, Arg-110, and His-150 each contribute to the an N-acylsphingoid base 1-phosphate site.

Belongs to the GLTP family. In terms of tissue distribution, ubiquitous. Detected in heart, brain, placenta, lung, liver, skeletal muscle, kidney, pancreas, spleen, thymus, prostate, testis, ovary, small intestine, colon and peripheral blood leukocytes.

It localises to the cytoplasm. The protein localises to the cytosol. It is found in the golgi apparatus. Its subcellular location is the trans-Golgi network membrane. The protein resides in the cell membrane. It localises to the endosome membrane. The protein localises to the nucleus outer membrane. It carries out the reaction N-(hexadecanoyl)-sphing-4-enine-1-phosphate(in) = N-(hexadecanoyl)-sphing-4-enine-1-phosphate(out). The enzyme catalyses N-(9Z-octadecenoyl)-sphing-4-enine-1-phosphate(in) = N-(9Z-octadecenoyl)-sphing-4-enine-1-phosphate(out). Functionally, mediates the intracellular transfer of ceramide-1-phosphate (C1P) between organelle membranes and the cell membrane. Required for normal structure of the Golgi stacks. Can bind phosphoceramides with a variety of aliphatic chains, but has a preference for lipids with saturated C16:0 or monounsaturated C18:1 aliphatic chains, and is inefficient with phosphoceramides containing lignoceryl (C24:0). Plays a role in the regulation of the cellular levels of ceramide-1-phosphate, and thereby contributes to the regulation of phospholipase PLA2G4A activity and the release of arachidonic acid. Has no activity with galactosylceramide, lactosylceramide, sphingomyelin, phosphatidylcholine, phosphatidic acid and ceramide. C1P transfer is stimulated by phosphatidylserine in C1P source vesicles. Regulates autophagy, inflammasome mediated IL1B and IL18 processing, and pyroptosis, but not apoptosis. The sequence is that of Ceramide-1-phosphate transfer protein from Homo sapiens (Human).